Reading from the N-terminus, the 197-residue chain is Nucleoside triphosphate pyrophosphatase (197 aa).

Catalysis depends on Asp70, which acts as the Proton acceptor.

This sequence belongs to the Maf family. Requires a divalent metal cation as cofactor.

The protein localises to the cytoplasm. It catalyses the reaction a ribonucleoside 5'-triphosphate + H2O = a ribonucleoside 5'-phosphate + diphosphate + H(+). The enzyme catalyses a 2'-deoxyribonucleoside 5'-triphosphate + H2O = a 2'-deoxyribonucleoside 5'-phosphate + diphosphate + H(+). Its function is as follows. Nucleoside triphosphate pyrophosphatase. May have a dual role in cell division arrest and in preventing the incorporation of modified nucleotides into cellular nucleic acids. In Shigella flexneri, this protein is Nucleoside triphosphate pyrophosphatase (yhdE).